A 426-amino-acid polypeptide reads, in one-letter code: F-box protein At2g15640 (426 aa).

Positions 1–48 constitute an F-box domain; the sequence is MNPSTITNDLTVEILSRLPAKSVARFHCVSKQWGSIFGSPYFKELFLT.

This chain is F-box protein At2g15640, found in Arabidopsis thaliana (Mouse-ear cress).